The chain runs to 681 residues: Structure-specific endonuclease subunit SLX4 (681 aa).

Disordered stretches follow at residues 239 to 305 and 505 to 528; these read EREK…QEQL and EVTG…NENL. A compositionally biased stretch (polar residues) spans 251–261; that stretch reads SDSSPEPTQLL. Acidic residues predominate over residues 265 to 281; that stretch reads IIEEEHEVDEEEEDNEN. Polar residues-rich tracts occupy residues 288–305 and 518–528; these read QLAS…QEQL and QVPSSPGNENL.

This sequence belongs to the SLX4 family. As to quaternary structure, forms a heterodimer with SLX1. In terms of processing, phosphorylated in response to DNA damage.

It is found in the nucleus. Regulatory subunit of the SLX1-SLX4 structure-specific endonuclease that resolves DNA secondary structures generated during DNA repair and recombination. Has endonuclease activity towards branched DNA substrates, introducing single-strand cuts in duplex DNA close to junctions with ss-DNA. The protein is Structure-specific endonuclease subunit SLX4 of Meyerozyma guilliermondii (strain ATCC 6260 / CBS 566 / DSM 6381 / JCM 1539 / NBRC 10279 / NRRL Y-324) (Yeast).